The chain runs to 282 residues: Putative 1-acyl-sn-glycerol-3-phosphate acyltransferase acl-2 (282 aa).

The next 2 helical transmembrane spans lie at phenylalanine 4–threonine 24 and isoleucine 32–proline 52. The HXXXXD motif signature appears at histidine 98–aspartate 103. Residues isoleucine 122–aspartate 142 form a helical membrane-spanning segment.

This sequence belongs to the 1-acyl-sn-glycerol-3-phosphate acyltransferase family.

The protein resides in the membrane. It carries out the reaction a 1-acyl-sn-glycero-3-phosphate + an acyl-CoA = a 1,2-diacyl-sn-glycero-3-phosphate + CoA. Its pathway is phospholipid metabolism; CDP-diacylglycerol biosynthesis; CDP-diacylglycerol from sn-glycerol 3-phosphate: step 2/3. Its function is as follows. Converts lysophosphatidic acid (LPA) into phosphatidic acid by incorporating an acyl moiety at the sn-2 position of the glycerol backbone. This is Putative 1-acyl-sn-glycerol-3-phosphate acyltransferase acl-2 (acl-2) from Caenorhabditis elegans.